Consider the following 396-residue polypeptide: Ribosomal RNA large subunit methyltransferase I (396 aa).

The region spanning 2 to 79 (AIRIKLKPGR…REEEIDRAFF (78 aa)) is the PUA domain.

It belongs to the methyltransferase superfamily. RlmI family.

It is found in the cytoplasm. The enzyme catalyses cytidine(1962) in 23S rRNA + S-adenosyl-L-methionine = 5-methylcytidine(1962) in 23S rRNA + S-adenosyl-L-homocysteine + H(+). In terms of biological role, specifically methylates the cytosine at position 1962 (m5C1962) of 23S rRNA. The chain is Ribosomal RNA large subunit methyltransferase I from Shewanella putrefaciens (strain CN-32 / ATCC BAA-453).